A 320-amino-acid polypeptide reads, in one-letter code: MQNKENREPRVQQTPSAGVGPLRVEMNPDTHAVSGPGRVPVKSNSKVLSIDDFDIGRPLGKGKFGNVYLARERKLKVVIALKVLFKSQMVKEGVEHQLRREIEIQSHLRHPNILRFYNYFHDDTRVFLILEYAPRGEMYKELQRYGRFDDQRTATYMEEVSDALQYCHEKKVIHRDIKPENLLLGYRGELKIADFGWSVHAPSLRRRTMCGTLDYLPPEMIEGHSHDEKVDLWSIGVLCYECLVGNPPFETASHAETYKRITKVDLQFPKLVSEGARDLISKLLRHSPSMRLPLRSVMEHPWVKANSRRVLPPVCSSEPH.

Residues 1-10 show a composition bias toward basic and acidic residues; it reads MQNKENREPR. A disordered region spans residues 1-38; that stretch reads MQNKENREPRVQQTPSAGVGPLRVEMNPDTHAVSGPGR. Positions 53 to 303 constitute a Protein kinase domain; it reads FDIGRPLGKG…LRSVMEHPWV (251 aa). Residues 59–67 and K82 contribute to the ATP site; that span reads LGKGKFGNV. D176 serves as the catalytic Proton acceptor.

This sequence belongs to the protein kinase superfamily. Ser/Thr protein kinase family. Aurora subfamily. In terms of assembly, component of the chromosomal passenger complex (CPC).

It localises to the nucleus. The protein localises to the chromosome. Its subcellular location is the centromere. The protein resides in the cytoplasm. It is found in the cytoskeleton. It localises to the spindle. The protein localises to the midbody. The catalysed reaction is L-seryl-[protein] + ATP = O-phospho-L-seryl-[protein] + ADP + H(+). It catalyses the reaction L-threonyl-[protein] + ATP = O-phospho-L-threonyl-[protein] + ADP + H(+). Its activity is regulated as follows. Kinase activity is stimulated by cell-cycle specific phosphorylation. Functionally, serine/threonine-protein kinase component of the chromosomal passenger complex (CPC), a complex that acts as a key regulator of mitosis. The CPC complex has essential functions at the centromere in ensuring correct chromosome alignment and segregation and is required for chromatin-induced microtubule stabilization and spindle assembly. Involved in the bipolar attachment of spindle microtubules to kinetochores and is a key regulator for the onset of cytokinesis during mitosis. Required for central/midzone spindle assembly and cleavage furrow formation. Key component of the cytokinesis checkpoint, a process required to delay abscission to prevent both premature resolution of intercellular chromosome bridges and accumulation of DNA damage. Phosphorylates 'Ser-10' of histone H3 during mitosis. The sequence is that of Aurora kinase B (aurkb) from Danio rerio (Zebrafish).